Consider the following 2014-residue polypeptide: Leucine-rich repeat serine/threonine-protein kinase 1 (2014 aa).

ANK repeat units lie at residues 51 to 81 (QCPS…CEES), 86 to 116 (EKGQ…ELPT), 119 to 148 (TDDN…GPCT), 152 to 182 (LLNW…DPEN), and 193 to 222 (IVRL…YFCS). LRR repeat units lie at residues 279-300 (QITE…IPWG), 303-324 (NLKK…QSSD), 330-351 (RLLE…FLHL), 353-374 (KLQK…ENAT), 381-402 (KLQE…FMHS), 405-426 (SLTS…WSCP), 427-447 (LKCC…MAVF), 451-472 (HLRD…LFQL), 474-495 (ALMF…EKWT), 498-519 (QLKT…LKTK), 549-570 (SLEV…VCLL), 572-594 (NLSE…LGQL), and 596-617 (NLWQ…VRKE). The 195-residue stretch at 632-826 (KAEKCKLMKM…QLIFHVTCNM (195 aa)) folds into the Roc domain. P647, R648, G650, K651, S652, T653, E670, H758, D760, C806, and K807 together coordinate GDP. The COR domain occupies 840 to 1237 (GRLIPRSYIS…PARLFLENSK (398 aa)). Residue T1061 is modified to Phosphothreonine. S1064 and S1074 each carry phosphoserine. The residue at position 1075 (T1075) is a Phosphothreonine. Residues 1242–1525 (EGENSILGQG…VVSQMKDPTF (284 aa)) form the Protein kinase domain. ATP contacts are provided by residues 1248–1256 (LGQGGSGTV) and K1270. The active-site Proton acceptor is D1386. WD repeat units follow at residues 1539–1579 (AFFS…RMTC), 1582–1622 (MKLS…QALD), 1623–1668 (TPAV…SCSY), 1693–1729 (VKAM…RLEP), 1730–1778 (YAAP…YFCG), 1779–1948 (DPNP…AVLK), and 1950–1986 (RELN…AVWR). The interval 1791–1906 (PSVLETPGSH…MDGETFSQHL (116 aa)) is WD40 loop; involved in dimer stabilization. A disordered region spans residues 1839–1895 (SMSSYSSSPPHQDPRSPSSLPSSLTSYSSVPFSANYEDSDRLQEPSVTSDRTEHDLS). Residues 1853 to 1871 (RSPSSLPSSLTSYSSVPFS) are compositionally biased toward low complexity.

The protein belongs to the protein kinase superfamily. TKL Ser/Thr protein kinase family. ROCO subfamily. As to quaternary structure, homodimer. The homodimer is autoinhibited and stabilized by its N-terminal residues and ANK repeats. Interacts with CSK. It depends on Mg(2+) as a cofactor. Mn(2+) is required as a cofactor. Post-translationally, autophosphorylated. Autophosphorylation in inhibited in its dimeric state. Phosphorylated by protein kinase C isozymes PRKCA, PRKCB, PRKCG, PRKCE, PRKCZ and PRKCT at Ser-1064, Ser-1074 and Thr-1075. Phosphorylation at these residues activates the kinase activity of LRRK1 to phosphorylate RAB7A. As to expression, expressed in osteoclasts and bone marrow stromal cells.

It is found in the cytoplasm. The protein localises to the cell membrane. The enzyme catalyses L-seryl-[protein] + ATP = O-phospho-L-seryl-[protein] + ADP + H(+). It catalyses the reaction L-threonyl-[protein] + ATP = O-phospho-L-threonyl-[protein] + ADP + H(+). With respect to regulation, activated by phosphorylation by PKC. Binds both GTP and GDP; binding of GTP stimulates kinase activity. Sterically autoinhibited in its dimeric state. Its function is as follows. Serine/threonine-protein kinase which phosphorylates RAB proteins involved in intracellular trafficking. Phosphorylates RAB7A; this activity is dependent on protein kinase C (PKC) activation. Plays a role in the negative regulation of bone mass, acting through the maturation of osteoclasts. The chain is Leucine-rich repeat serine/threonine-protein kinase 1 from Mus musculus (Mouse).